We begin with the raw amino-acid sequence, 277 residues long: Uridine-cytidine kinase 1 (277 aa).

The tract at residues 1 to 30 (MASAGGEDCESPAPEADRPHQRPFLIGVSG) is disordered. Position 30–38 (30–38 (GGTASGKST)) interacts with ATP. Aspartate 65 is a catalytic residue. Positions 87, 115, 120, 169, 178, and 186 each coordinate substrate. Aspartate 215 is an ATP binding site. The interval 247 to 277 (SYKRTFSEPGDHPGMLTSGKRSHLESSSRPH) is disordered. Threonine 251 carries the post-translational modification Phosphothreonine. Serine 253 carries the phosphoserine modification. Residues 268–277 (SHLESSSRPH) show a composition bias toward basic and acidic residues.

Belongs to the uridine kinase family. In terms of tissue distribution, ubiquitous.

The catalysed reaction is uridine + ATP = UMP + ADP + H(+). The enzyme catalyses cytidine + ATP = CMP + ADP + H(+). Its pathway is pyrimidine metabolism; CTP biosynthesis via salvage pathway; CTP from cytidine: step 1/3. The protein operates within pyrimidine metabolism; UMP biosynthesis via salvage pathway; UMP from uridine: step 1/1. Its function is as follows. Phosphorylates uridine and cytidine to uridine monophosphate and cytidine monophosphate. Does not phosphorylate deoxyribonucleosides or purine ribonucleosides. Can use ATP or GTP as a phosphate donor. Can also phosphorylate cytidine and uridine nucleoside analogs such as 6-azauridine, 5-fluorouridine, 4-thiouridine, 5-bromouridine, N(4)-acetylcytidine, N(4)-benzoylcytidine, 5-fluorocytidine, 2-thiocytidine, 5-methylcytidine, and N(4)-anisoylcytidine. The sequence is that of Uridine-cytidine kinase 1 (UCK1) from Homo sapiens (Human).